A 97-amino-acid polypeptide reads, in one-letter code: Putative pterin-4-alpha-carbinolamine dehydratase (97 aa).

It belongs to the pterin-4-alpha-carbinolamine dehydratase family.

It carries out the reaction (4aS,6R)-4a-hydroxy-L-erythro-5,6,7,8-tetrahydrobiopterin = (6R)-L-erythro-6,7-dihydrobiopterin + H2O. The sequence is that of Putative pterin-4-alpha-carbinolamine dehydratase from Dinoroseobacter shibae (strain DSM 16493 / NCIMB 14021 / DFL 12).